Consider the following 202-residue polypeptide: Pyridoxal 5'-phosphate synthase subunit PdxT (202 aa).

52–54 (GES) contributes to the L-glutamine binding site. Cysteine 84 (nucleophile) is an active-site residue. L-glutamine-binding positions include arginine 116 and 143 to 144 (IR). Active-site charge relay system residues include histidine 184 and glutamate 186.

The protein belongs to the glutaminase PdxT/SNO family. In terms of assembly, in the presence of PdxS, forms a dodecamer of heterodimers. Only shows activity in the heterodimer.

The catalysed reaction is aldehydo-D-ribose 5-phosphate + D-glyceraldehyde 3-phosphate + L-glutamine = pyridoxal 5'-phosphate + L-glutamate + phosphate + 3 H2O + H(+). It catalyses the reaction L-glutamine + H2O = L-glutamate + NH4(+). The protein operates within cofactor biosynthesis; pyridoxal 5'-phosphate biosynthesis. In terms of biological role, catalyzes the hydrolysis of glutamine to glutamate and ammonia as part of the biosynthesis of pyridoxal 5'-phosphate. The resulting ammonia molecule is channeled to the active site of PdxS. The polypeptide is Pyridoxal 5'-phosphate synthase subunit PdxT (Pyrobaculum neutrophilum (strain DSM 2338 / JCM 9278 / NBRC 100436 / V24Sta) (Thermoproteus neutrophilus)).